Reading from the N-terminus, the 534-residue chain is Protein tweety homolog 2 (534 aa).

The Extracellular segment spans residues 1–44 (MATARVEYIAPWWVYWLHNLPHVDFSLQRESGDFNPKDPGYQQT). The chain crosses the membrane as a helical span at residues 45–65 (LLFVALFIALCAAVNLLFVSG). The Cytoplasmic portion of the chain corresponds to 66 to 87 (YLICLCCCKKEDETETKMTSSC). The helical transmembrane segment at 88–108 (CVTWTAAVSGLLCCAAVGIGF) threads the bilayer. Residues 109 to 213 (YGNSETNDGV…NASIIEYYRW (105 aa)) are Extracellular-facing. Ca(2+) is bound by residues Glu-113 and Asp-116. A glycan (N-linked (GlcNAc...) asparagine) is linked at Asn-129. The RGD signature appears at 164 to 166 (RGD). Residues Asn-197 and Asn-204 are each glycosylated (N-linked (GlcNAc...) asparagine). Residues 214–234 (LSYLILFITDVVICLVTCLGL) form a helical membrane-spanning segment. Residues 235-240 (AKKSKC) lie on the Cytoplasmic side of the membrane. The helical transmembrane segment at 241–261 (LLLTMLCCGLIALMLSWASLA) threads the bilayer. At 262 to 388 (LETSSAVGTS…IGICYDGVEG (127 aa)) the chain is on the extracellular side. Intrachain disulfides connect Cys-274-Cys-382 and Cys-300-Cys-367. Asn-352 carries an N-linked (GlcNAc...) asparagine glycan. Residues 389 to 409 (LLYLSLFSLLAAVAFTAMVCA) form a helical membrane-spanning segment. Over 410 to 534 (MPRAWKHLAA…PNIYSNVFPA (125 aa)) the chain is Cytoplasmic.

Belongs to the tweety family. As to quaternary structure, forms cis-homodimers in the presence of Ca(+2) and forms monomers and trans-dimers in the absence of Ca(2+).

Its subcellular location is the cell membrane. The catalysed reaction is chloride(in) = chloride(out). It carries out the reaction L-glutamate(out) = L-glutamate(in). Functionally, may act as a calcium-independent, swelling-dependent volume-regulated anion channel (VRAC-swell) which plays a pivotal role in the process of regulatory volume decrease (RVD) in the brain through the efflux of anions like chloride and organic osmolytes like glutamate. Probable large-conductance Ca(2+)-activated chloride channel. The protein is Protein tweety homolog 2 (ttyh2) of Xenopus laevis (African clawed frog).